Here is a 341-residue protein sequence, read N- to C-terminus: Very-long-chain 3-oxoacyl-CoA reductase (341 aa).

The chain crosses the membrane as a helical span at residues 17–37; it reads ALYGALLLGVYKLTTFALSLV. NADP(+) contacts are provided by V63, D117, N144, Y218, K222, V251, and S253. Catalysis depends on Y218, which acts as the Proton donor. The active-site Lowers pKa of active site Tyr is the K222.

It belongs to the short-chain dehydrogenases/reductases (SDR) family.

It localises to the endoplasmic reticulum membrane. It carries out the reaction a very-long-chain (3R)-3-hydroxyacyl-CoA + NADP(+) = a very-long-chain 3-oxoacyl-CoA + NADPH + H(+). The protein operates within lipid metabolism; fatty acid biosynthesis. In terms of biological role, component of the microsomal membrane bound fatty acid elongation system, which produces the 26-carbon very long-chain fatty acids (VLCFA) from palmitate. Catalyzes the reduction of the 3-ketoacyl-CoA intermediate that is formed in each cycle of fatty acid elongation. VLCFAs serve as precursors for ceramide and sphingolipids. This chain is Very-long-chain 3-oxoacyl-CoA reductase, found in Meyerozyma guilliermondii (strain ATCC 6260 / CBS 566 / DSM 6381 / JCM 1539 / NBRC 10279 / NRRL Y-324) (Yeast).